We begin with the raw amino-acid sequence, 470 residues long: Bifunctional protein ArgHA (470 aa).

The tract at residues methionine 1–arginine 470 is argininosuccinate lyase.

The protein in the N-terminal section; belongs to the lyase 1 family. Argininosuccinate lyase subfamily. This sequence in the C-terminal section; belongs to the acetyltransferase family. ArgA subfamily.

The protein resides in the cytoplasm. The enzyme catalyses 2-(N(omega)-L-arginino)succinate = fumarate + L-arginine. The catalysed reaction is L-glutamate + acetyl-CoA = N-acetyl-L-glutamate + CoA + H(+). Its pathway is amino-acid biosynthesis; L-arginine biosynthesis; N(2)-acetyl-L-ornithine from L-glutamate: step 1/4. It functions in the pathway amino-acid biosynthesis; L-arginine biosynthesis; L-arginine from L-ornithine and carbamoyl phosphate: step 3/3. The sequence is that of Bifunctional protein ArgHA (argHA) from Moritella profunda.